The chain runs to 201 residues: Peptidyl-tRNA hydrolase (201 aa).

Y17 is a binding site for tRNA. H22 acts as the Proton acceptor in catalysis. Residues Y68, N70, and N116 each contribute to the tRNA site.

This sequence belongs to the PTH family. Monomer.

The protein resides in the cytoplasm. The enzyme catalyses an N-acyl-L-alpha-aminoacyl-tRNA + H2O = an N-acyl-L-amino acid + a tRNA + H(+). Its function is as follows. Hydrolyzes ribosome-free peptidyl-tRNAs (with 1 or more amino acids incorporated), which drop off the ribosome during protein synthesis, or as a result of ribosome stalling. In terms of biological role, catalyzes the release of premature peptidyl moieties from peptidyl-tRNA molecules trapped in stalled 50S ribosomal subunits, and thus maintains levels of free tRNAs and 50S ribosomes. This is Peptidyl-tRNA hydrolase from Lawsonia intracellularis (strain PHE/MN1-00).